The chain runs to 153 residues: Peptide deformylase (153 aa).

2 residues coordinate Fe cation: C87 and H129. Residue E130 is part of the active site. Residue H133 coordinates Fe cation.

It belongs to the polypeptide deformylase family. Fe(2+) serves as cofactor.

The catalysed reaction is N-terminal N-formyl-L-methionyl-[peptide] + H2O = N-terminal L-methionyl-[peptide] + formate. In terms of biological role, removes the formyl group from the N-terminal Met of newly synthesized proteins. Requires at least a dipeptide for an efficient rate of reaction. N-terminal L-methionine is a prerequisite for activity but the enzyme has broad specificity at other positions. The polypeptide is Peptide deformylase (Dictyoglomus thermophilum (strain ATCC 35947 / DSM 3960 / H-6-12)).